The sequence spans 512 residues: Plastidal glycolate/glycerate translocator 1, chloroplastic (512 aa).

The N-terminal 76 residues, 1–76, are a transit peptide targeting the chloroplast; that stretch reads MATLLATPIF…MNFERKLSVQ (76 aa). A77 carries the post-translational modification N-acetylalanine. Transmembrane regions (helical) follow at residues 93-113, 127-147, 160-180, 195-215, 238-258, 270-290, 293-313, 336-356, 367-387, 398-418, 425-445, and 480-500; these read VIAI…DYFL, ALFG…VVPA, FLFI…VLPL, YIVA…AIAV, LELW…LFYP, PFLL…PSSI, VFHP…AFGY, AGDI…FSMF, AEIF…TALV, TVSI…VSLF, LTAA…QVVL, and LPFC…LCSV.

The protein belongs to the CidB/LrgB family. As to expression, expressed in leaves, stems and flowers, but not in roots.

It localises to the plastid. Its subcellular location is the chloroplast membrane. In terms of biological role, glycolate/glycerate transporter required for photorespiration. In Arabidopsis thaliana (Mouse-ear cress), this protein is Plastidal glycolate/glycerate translocator 1, chloroplastic (PLGG1).